The sequence spans 278 residues: Sulfur carrier protein FdhD (278 aa).

Residue Cys121 is the Cysteine persulfide intermediate of the active site. Position 260–265 (260–265 (FCKPGR)) interacts with Mo-bis(molybdopterin guanine dinucleotide).

The protein belongs to the FdhD family.

It localises to the cytoplasm. Functionally, required for formate dehydrogenase (FDH) activity. Acts as a sulfur carrier protein that transfers sulfur from IscS to the molybdenum cofactor prior to its insertion into FDH. The sequence is that of Sulfur carrier protein FdhD from Klebsiella pneumoniae subsp. pneumoniae (strain ATCC 700721 / MGH 78578).